Reading from the N-terminus, the 1164-residue chain is MKKNTDSEMDQRLGYKFLVPDPKAGVFYRPLHFQYVSYSNFILHRLHEILTVKRPLLSFKNNTERIMIEISNVKVTPPDYSPIIASIKGKSYDALATFTVNIFKEVMTKEGISITKISSYEGKDSHLIKIPLLIGYGNKNPLDTAKYLVPNVIGGVFINKQSVEKVGINLVEKITTWPKFRVVKPNSFTFSFSSVSPPNVLPTRYRHYKISLDISQLEASNISSTKTFITVNIVLLSQYLSRVSLEFIRRSLSYDMPPEVVYLVNAIIDSAKRITESITDFNIDTYINDLVEAEHIKQKSQLTINEFKYEMLHNFLPHMNYTPDQLKGFYMISLLRKFLYCIYHTSRYPDRDSMVCHRILTYGKYFETLAHDELENYIGNIRNDIMNNHKNRGTYAVNIHVLTTPGLNHAFSSLLSGKFKKSDGSYRTHPHYSWMQNISIPRSVGFYPDQVKISKMFSVRKYHPSQYLYFCSSDVPERGPQVGLVSQLSVLSSITNILTSEYLDLEKKICEYIRSYYKDDISYFETGFPITIENALVASLNPNMICDFVTDFRRRKRMGFFGNLEVGITLVRDHMNEIRINIGAGRLVRPFLVVDNGELMMDVCPELESRLDDMTFSDIQKEFPHVIEMVDIEQFTFSNVCESVQKFRMMSKDERKQYDLCDFPAEFRDGYVASSLVGINHNSGPRAILGCAQAKQAISCLSSDIRNKIDNGIHLMYPERPIVISKALETSKIAANCFGQHVTIALMSYKGINQEDGIIIKKQFIQRGGLDIVTAKKHQVEIPLENFNNKERDRSNAYSKLESNGLVRLNAFLESGDAMARNISSRTLEDDFARDNQISFDVSEKYTDMYKSRVERVQVELTDKVKVRVLTMKERRPILGDKFTTRTSQKGTVAYIADETELPYDENGITPDVIINSTSIFSRKTISMLIEVILTAAYSAKPYNNKGENRPVCFPSSNETSIDTYMQFAKQCYEHSNPKLSDEELSDKIFCEKILYDPETDKPYTSKVFFGPIYYLRLRHLTQDKATVRCRGKKTKLIRQANEGRKRGGGIKFGEMERDCLIAHGAANTITEVLKDSEEDYQDVYICENCGDIAAQIKSINTCLRCSKLNLSPLLTKIDTTHVSKVFLTQMNARGVKVKLDFERRPPSFYKPLDKVDLKPSFLV.

This sequence belongs to the RNA polymerase beta chain family. As to quaternary structure, the DNA-dependent RNA polymerase used for intermediate and late genes expression consists of eight subunits (147) kDa, (133) kDa, (35) kDa, (30) kDa, (22) kDa, (19) kDa, (18) kDa and (7) kDa totalling more than 500 kDa in mass. The same holoenzyme, with the addition of the transcription-specificity factor RAP94, is used for early gene expression.

Its subcellular location is the virion. The catalysed reaction is RNA(n) + a ribonucleoside 5'-triphosphate = RNA(n+1) + diphosphate. In terms of biological role, part of the DNA-dependent RNA polymerase which catalyzes the transcription of viral DNA into RNA using the four ribonucleoside triphosphates as substrates. Responsible for the transcription of early, intermediate and late genes. DNA-dependent RNA polymerase associates with the early transcription factor (ETF), itself composed of D6 and A7, thereby allowing the early genes transcription. Late transcription, and probably also intermediate transcription, require newly synthesized RNA polymerase. This Cowpox virus (strain GRI-90 / Grishak) (CPV) protein is DNA-directed RNA polymerase 132 kDa polypeptide (RPO132).